The primary structure comprises 437 residues: Doublesex- and mab-3-related transcription factor A2 (437 aa).

The segment at residues 49–96 is a DNA-binding region (DM); the sequence is CARCRNHGVVSALKGHKRYCRWKDCMCAKCTLIAERQRVMAAQVALRR. The segment at 160–253 is disordered; the sequence is IPRSMTPQLP…DPSSSSLARQ (94 aa). Composition is skewed to low complexity over residues 179-201 and 223-235; these read SEPV…SGSE and SPSL…SESG. The 36-residue stretch at 254-289 folds into the DMA domain; it reads RTPINILTRVFPAQKRSVLELVLQGCGGDVVQAIEQ.

Belongs to the DMRT family.

The protein resides in the nucleus. Its function is as follows. May be involved in sexual development. The protein is Doublesex- and mab-3-related transcription factor A2 (dmrta2) of Xenopus laevis (African clawed frog).